A 642-amino-acid polypeptide reads, in one-letter code: Chaperone protein DnaK (642 aa).

Residue Thr196 is modified to Phosphothreonine; by autocatalysis. Residues 593–603 (STMYQTPSGDT) show a composition bias toward polar residues. Positions 593-642 (STMYQTPSGDTPPSEPETGASEESKGGDKTQGDGEVDAEYEVIDGNDKDK) are disordered. Residues 614–624 (EESKGGDKTQG) show a composition bias toward basic and acidic residues. Over residues 626-636 (GEVDAEYEVID) the composition is skewed to acidic residues.

This sequence belongs to the heat shock protein 70 family.

In terms of biological role, acts as a chaperone. The polypeptide is Chaperone protein DnaK (Chlorobium phaeobacteroides (strain BS1)).